The sequence spans 398 residues: Glucose-1-phosphate adenylyltransferase (398 aa).

Residues Tyr100, Gly165, 180–181 (EK), and Ser191 contribute to the alpha-D-glucose 1-phosphate site.

This sequence belongs to the bacterial/plant glucose-1-phosphate adenylyltransferase family. As to quaternary structure, homotetramer.

The catalysed reaction is alpha-D-glucose 1-phosphate + ATP + H(+) = ADP-alpha-D-glucose + diphosphate. It functions in the pathway glycan biosynthesis; glycogen biosynthesis. Functionally, involved in the biosynthesis of ADP-glucose, a building block required for the elongation reactions to produce glycogen. Catalyzes the reaction between ATP and alpha-D-glucose 1-phosphate (G1P) to produce pyrophosphate and ADP-Glc. The protein is Glucose-1-phosphate adenylyltransferase of Desulfitobacterium hafniense (strain Y51).